Consider the following 96-residue polypeptide: Large ribosomal subunit protein eL14 (96 aa).

The protein belongs to the eukaryotic ribosomal protein eL14 family.

This is Large ribosomal subunit protein eL14 from Saccharolobus islandicus (strain Y.N.15.51 / Yellowstone #2) (Sulfolobus islandicus).